Consider the following 311-residue polypeptide: 4-hydroxy-tetrahydrodipicolinate synthase (311 aa).

A pyruvate-binding site is contributed by T51. Residue Y140 is the Proton donor/acceptor of the active site. Residue K168 is the Schiff-base intermediate with substrate of the active site. I209 provides a ligand contact to pyruvate.

Belongs to the DapA family. Homotetramer; dimer of dimers.

The protein resides in the cytoplasm. The catalysed reaction is L-aspartate 4-semialdehyde + pyruvate = (2S,4S)-4-hydroxy-2,3,4,5-tetrahydrodipicolinate + H2O + H(+). It functions in the pathway amino-acid biosynthesis; L-lysine biosynthesis via DAP pathway; (S)-tetrahydrodipicolinate from L-aspartate: step 3/4. Its function is as follows. Catalyzes the condensation of (S)-aspartate-beta-semialdehyde [(S)-ASA] and pyruvate to 4-hydroxy-tetrahydrodipicolinate (HTPA). The protein is 4-hydroxy-tetrahydrodipicolinate synthase of Streptococcus pneumoniae (strain Taiwan19F-14).